Reading from the N-terminus, the 181-residue chain is Large ribosomal subunit protein uL22 (181 aa).

The tract at residues Pro157–His181 is disordered.

It belongs to the universal ribosomal protein uL22 family.

The polypeptide is Large ribosomal subunit protein uL22 (RpL17) (Biphyllus lunatus (Beetle)).